We begin with the raw amino-acid sequence, 231 residues long: Ion-translocating oxidoreductase complex subunit E (231 aa).

6 consecutive transmembrane segments (helical) span residues 18 to 38, 39 to 59, 63 to 83, 86 to 106, 125 to 145, and 182 to 202; these read ALVQLLGLCPLLAVTSTATNA, LGLGLATTLVLTLTNLTISTL, TPAEIRIPIYVMIIASVVSAV, LINAYAFGLYQSLGIFIPLIV, ALSALDGFSIGMGATCAMFVL, and PFLLAMLPPGAFIGLGLMLAG.

It belongs to the NqrDE/RnfAE family. As to quaternary structure, the complex is composed of six subunits: RsxA, RsxB, RsxC, RsxD, RsxE and RsxG.

It is found in the cell inner membrane. Functionally, part of a membrane-bound complex that couples electron transfer with translocation of ions across the membrane. Required to maintain the reduced state of SoxR. The chain is Ion-translocating oxidoreductase complex subunit E from Shigella boydii serotype 18 (strain CDC 3083-94 / BS512).